The following is a 165-amino-acid chain: Chorismate pyruvate-lyase (165 aa).

Residues M35, R77, L115, and E156 each contribute to the substrate site.

It belongs to the UbiC family. Monomer.

The protein resides in the cytoplasm. It catalyses the reaction chorismate = 4-hydroxybenzoate + pyruvate. It functions in the pathway cofactor biosynthesis; ubiquinone biosynthesis. Functionally, removes the pyruvyl group from chorismate, with concomitant aromatization of the ring, to provide 4-hydroxybenzoate (4HB) for the ubiquinone pathway. In Shigella dysenteriae serotype 1 (strain Sd197), this protein is Chorismate pyruvate-lyase.